The following is a 304-amino-acid chain: Nicotinamide/nicotinic acid mononucleotide adenylyltransferase 2 (304 aa).

Serine 16 and phenylalanine 17 together coordinate NAD(+). Histidine 24 is a binding site for ATP. Residues tryptophan 92 and threonine 95 each coordinate NAD(+). S-palmitoyl cysteine attachment occurs at residues cysteine 161 and cysteine 162. NAD(+) is bound by residues glycine 197, aspartate 199, leucine 209, tryptophan 210, and arginine 229. Threonine 268–arginine 271 contacts ATP.

Belongs to the eukaryotic NMN adenylyltransferase family. In terms of assembly, monomer. The cofactor is Mg(2+).

It localises to the golgi apparatus membrane. Its subcellular location is the cytoplasmic vesicle membrane. The protein resides in the cytoplasm. The protein localises to the cell projection. It is found in the axon. The enzyme catalyses beta-nicotinamide D-ribonucleotide + ATP + H(+) = diphosphate + NAD(+). It catalyses the reaction nicotinate beta-D-ribonucleotide + ATP + H(+) = deamido-NAD(+) + diphosphate. The protein operates within cofactor biosynthesis; NAD(+) biosynthesis; NAD(+) from nicotinamide D-ribonucleotide: step 1/1. It functions in the pathway cofactor biosynthesis; NAD(+) biosynthesis; deamido-NAD(+) from nicotinate D-ribonucleotide: step 1/1. Nicotinamide/nicotinate-nucleotide adenylyltransferase that acts as an axon maintenance factor. Axon survival factor required for the maintenance of healthy axons: acts by delaying Wallerian axon degeneration, an evolutionarily conserved process that drives the loss of damaged axons. Catalyzes the formation of NAD(+) from nicotinamide mononucleotide (NMN) and ATP. Can also use the deamidated form; nicotinic acid mononucleotide (NaMN) as substrate but with a lower efficiency. Also catalyzes the reverse reaction, i.e. the pyrophosphorolytic cleavage of NAD(+). For the pyrophosphorolytic activity prefers NAD(+), NADH and NaAD as substrates and degrades nicotinic acid adenine dinucleotide phosphate (NHD) less effectively. Also acts as an activator of ADP-ribosylation by supporting the catalytic activity of PARP16 and promoting mono-ADP-ribosylation of ribosomes by PARP16. May be involved in the maintenance of axonal integrity. The sequence is that of Nicotinamide/nicotinic acid mononucleotide adenylyltransferase 2 (nmnat2) from Danio rerio (Zebrafish).